Reading from the N-terminus, the 260-residue chain is Hydroxyacylglutathione hydrolase (260 aa).

His-66, His-68, Asp-70, His-71, His-125, Asp-150, and His-188 together coordinate Zn(2+).

The protein belongs to the metallo-beta-lactamase superfamily. Glyoxalase II family. In terms of assembly, monomer. Requires Zn(2+) as cofactor.

The catalysed reaction is an S-(2-hydroxyacyl)glutathione + H2O = a 2-hydroxy carboxylate + glutathione + H(+). Its pathway is secondary metabolite metabolism; methylglyoxal degradation; (R)-lactate from methylglyoxal: step 2/2. Functionally, thiolesterase that catalyzes the hydrolysis of S-D-lactoyl-glutathione to form glutathione and D-lactic acid. The chain is Hydroxyacylglutathione hydrolase from Prochlorococcus marinus (strain MIT 9303).